The following is a 108-amino-acid chain: Glutaredoxin-1 (108 aa).

The Glutaredoxin domain maps to 3–106; that stretch reads EEFVQQRLTN…DILSSIGVLR (104 aa). Cys23 and Cys26 form a disulfide bridge.

The protein belongs to the glutaredoxin family.

It localises to the virion. In terms of biological role, displays thioltransferase and dehydroascorbate reductase activities. This Variola virus (isolate Human/India/Ind3/1967) (VARV) protein is Glutaredoxin-1 (OPG075).